Here is a 340-residue protein sequence, read N- to C-terminus: Insulin gene enhancer protein ISL-2B (340 aa).

LIM zinc-binding domains are found at residues 9-62 and 71-125; these read CVGC…CKRD and CAKC…RADH. The segment at residues 172–231 is a DNA-binding region (homeobox); the sequence is TTRVRTVLNEKQLHTLRTCYNANPRPDALMKEQLVEMTGLSPRVIRVWFQNKRCKDKKRT. Residues 307 to 317 are compositionally biased toward low complexity; it reads ESGSMGNSSGS. The tract at residues 307–340 is disordered; that stretch reads ESGSMGNSSGSDVTSLSSQLPDTPNSMVPSPMDT. Residues 318–340 show a composition bias toward polar residues; the sequence is DVTSLSSQLPDTPNSMVPSPMDT.

It localises to the nucleus. Its function is as follows. Binds to one of the cis-acting domain of the insulin gene enhancer. May be involved in subtype specialization of primary motoneurons. The protein is Insulin gene enhancer protein ISL-2B (isl2b) of Oncorhynchus tshawytscha (Chinook salmon).